The following is a 121-amino-acid chain: Centrocin 2 (121 aa).

Residues 1-20 (MMIKIAVVLCAVMATSMVFA) form the signal peptide. A propeptide spanning residues 21-50 (NDVKEQELADLLDLLISEEVSSPDDAVAES) is cleaved from the precursor. 2 positions are modified to 6'-bromotryptophan: Trp-51 and Trp-59. A disulfide bridge connects residues Cys-77 and Cys-112. Residues 83–106 (SPQEARAKVLEAFPEMKESDLDEE) constitute a propeptide that is removed on maturation. Gln-107 bears the Pyrrolidone carboxylic acid mark. Position 119 is a histidine amide (His-119).

As to quaternary structure, heterodimer of a light and a heavy chain, probably disulfide-linked.

Functionally, has antimicrobial activity against Gram-negative bacteria, Gram-positive bacteria and against fungi with minimum inhibitory concentration (MIC) between 0.78 uM and 50 uM. Shows little hemolytic activity at concentrations up to 12.5 uM but &gt;50% lysis at 100 uM. This Echinus esculentus (Sea urchin) protein is Centrocin 2.